A 240-amino-acid chain; its full sequence is UDP-2,3-diacylglucosamine hydrolase (240 aa).

Mn(2+) is bound by residues Asp-9, His-11, Asp-43, Asn-81, and His-116. 81 to 82 (NR) is a substrate binding site. The substrate site is built by Asp-124, Ser-162, Lys-166, Lys-169, and His-197. Mn(2+) contacts are provided by His-197 and His-199.

This sequence belongs to the LpxH family. It depends on Mn(2+) as a cofactor.

It is found in the cell inner membrane. The enzyme catalyses UDP-2-N,3-O-bis[(3R)-3-hydroxytetradecanoyl]-alpha-D-glucosamine + H2O = 2-N,3-O-bis[(3R)-3-hydroxytetradecanoyl]-alpha-D-glucosaminyl 1-phosphate + UMP + 2 H(+). Its pathway is glycolipid biosynthesis; lipid IV(A) biosynthesis; lipid IV(A) from (3R)-3-hydroxytetradecanoyl-[acyl-carrier-protein] and UDP-N-acetyl-alpha-D-glucosamine: step 4/6. Its function is as follows. Hydrolyzes the pyrophosphate bond of UDP-2,3-diacylglucosamine to yield 2,3-diacylglucosamine 1-phosphate (lipid X) and UMP by catalyzing the attack of water at the alpha-P atom. Involved in the biosynthesis of lipid A, a phosphorylated glycolipid that anchors the lipopolysaccharide to the outer membrane of the cell. The sequence is that of UDP-2,3-diacylglucosamine hydrolase from Neisseria meningitidis serogroup B (strain ATCC BAA-335 / MC58).